The chain runs to 158 residues: MSDTLQSLDQLGSLKVSAPDAPQHLKKVDKFNRAYATGKRKDAVARVWIKPGAGKVIVNTREVEVYFARPVLRMMIQQPLVAAARAGQYDVICTVAGGGLSGQAGAVRHGISKALTYFEPELRGVLKKGGFLTRDSRVVERKKYGKAKARRSFQFSKR.

It belongs to the universal ribosomal protein uS9 family.

The protein is Small ribosomal subunit protein uS9 of Rhodopseudomonas palustris (strain BisA53).